A 522-amino-acid polypeptide reads, in one-letter code: 2-isopropylmalate synthase (522 aa).

Positions 5-267 constitute a Pyruvate carboxyltransferase domain; the sequence is VIIFDTTLRD…ETGINAKEIH (263 aa). Positions 14, 202, 204, and 238 each coordinate Mn(2+). Residues 392-522 form a regulatory domain region; it reads QLRQLVVQSD…MHKNRELGGV (131 aa).

This sequence belongs to the alpha-IPM synthase/homocitrate synthase family. LeuA type 1 subfamily. As to quaternary structure, homodimer. Mn(2+) is required as a cofactor.

Its subcellular location is the cytoplasm. It catalyses the reaction 3-methyl-2-oxobutanoate + acetyl-CoA + H2O = (2S)-2-isopropylmalate + CoA + H(+). It functions in the pathway amino-acid biosynthesis; L-leucine biosynthesis; L-leucine from 3-methyl-2-oxobutanoate: step 1/4. In terms of biological role, catalyzes the condensation of the acetyl group of acetyl-CoA with 3-methyl-2-oxobutanoate (2-ketoisovalerate) to form 3-carboxy-3-hydroxy-4-methylpentanoate (2-isopropylmalate). The polypeptide is 2-isopropylmalate synthase (Shewanella oneidensis (strain ATCC 700550 / JCM 31522 / CIP 106686 / LMG 19005 / NCIMB 14063 / MR-1)).